The primary structure comprises 417 residues: Serpin A9 (417 aa).

The N-terminal stretch at 1–23 (MASYLYGVLFAVGLCAPIYCVSP) is a signal peptide. Residues Asn-101 and Asn-390 are each glycosylated (N-linked (GlcNAc...) asparagine).

The protein belongs to the serpin family. In terms of tissue distribution, highly expressed in normal germinal center (GC) B-cells and GC B-cell-derived malignancies.

Its subcellular location is the secreted. The protein resides in the cytoplasm. It is found in the membrane. Protease inhibitor that inhibits trypsin and trypsin-like serine proteases (in vitro). Inhibits plasmin and thrombin with lower efficiency (in vitro). The sequence is that of Serpin A9 (SERPINA9) from Homo sapiens (Human).